Reading from the N-terminus, the 194-residue chain is ATP-dependent Clp protease proteolytic subunit 4 (194 aa).

S100 acts as the Nucleophile in catalysis. H125 is a catalytic residue.

The protein belongs to the peptidase S14 family. As to quaternary structure, fourteen ClpP subunits assemble into 2 heptameric rings which stack back to back to give a disk-like structure with a central cavity, resembling the structure of eukaryotic proteasomes.

It is found in the cytoplasm. The enzyme catalyses Hydrolysis of proteins to small peptides in the presence of ATP and magnesium. alpha-casein is the usual test substrate. In the absence of ATP, only oligopeptides shorter than five residues are hydrolyzed (such as succinyl-Leu-Tyr-|-NHMec, and Leu-Tyr-Leu-|-Tyr-Trp, in which cleavage of the -Tyr-|-Leu- and -Tyr-|-Trp bonds also occurs).. Its function is as follows. Cleaves peptides in various proteins in a process that requires ATP hydrolysis. Has a chymotrypsin-like activity. Plays a major role in the degradation of misfolded proteins. This is ATP-dependent Clp protease proteolytic subunit 4 from Rhodococcus jostii (strain RHA1).